A 552-amino-acid polypeptide reads, in one-letter code: Segmentation polarity homeobox protein engrailed (552 aa).

The span at 93-108 (SGSGSPASCSTPASST) shows a compositional bias: low complexity. Disordered regions lie at residues 93–112 (SGSG…PLTI), 130–171 (THTT…TAKP), 309–419 (PAAP…GGKN), and 433–460 (DRPS…PRTA). Over residues 135–151 (EEEEAEEDDDIDVDVDD) the composition is skewed to acidic residues. The segment covering 317–382 (PPLSSSASSL…SGSGVNASSP (66 aa)) has biased composition (low complexity). Residues 446–457 (QPKDKTNDEKRP) are compositionally biased toward basic and acidic residues. A DNA-binding region (homeobox) is located at residues 454-513 (EKRPRTAFSSEQLARLKREFNENRYLTERRRQQLSSELGLNEAQIKIWFQNKRAKIKKST).

This sequence belongs to the engrailed homeobox family. In terms of processing, phosphorylated. Phosphorylation may directly or allosterically modify its function.

It localises to the nucleus. Functionally, this protein specifies the body segmentation pattern. It is required for the development of the central nervous system. Transcriptional regulator that represses activated promoters. Wg signaling operates by inactivating the SGG repression of EN autoactivation. This is Segmentation polarity homeobox protein engrailed (en) from Drosophila melanogaster (Fruit fly).